Reading from the N-terminus, the 370-residue chain is Putative phosphoserine aminotransferase (370 aa).

Positions 1–22 (MAELTIPADLKPRDGRFGSGPS) are disordered. Arg-44 lines the L-glutamate pocket. Phe-102, Thr-148, Asp-170, and Gln-193 together coordinate pyridoxal 5'-phosphate. Lys-194 carries the post-translational modification N6-(pyridoxal phosphate)lysine. Pyridoxal 5'-phosphate is bound at residue 245-246 (NT).

Belongs to the class-V pyridoxal-phosphate-dependent aminotransferase family. SerC subfamily. As to quaternary structure, homodimer. Requires pyridoxal 5'-phosphate as cofactor.

It localises to the cytoplasm. It catalyses the reaction O-phospho-L-serine + 2-oxoglutarate = 3-phosphooxypyruvate + L-glutamate. The enzyme catalyses 4-(phosphooxy)-L-threonine + 2-oxoglutarate = (R)-3-hydroxy-2-oxo-4-phosphooxybutanoate + L-glutamate. The protein operates within amino-acid biosynthesis; L-serine biosynthesis; L-serine from 3-phospho-D-glycerate: step 2/3. It functions in the pathway cofactor biosynthesis; pyridoxine 5'-phosphate biosynthesis; pyridoxine 5'-phosphate from D-erythrose 4-phosphate: step 3/5. In terms of biological role, catalyzes the reversible conversion of 3-phosphohydroxypyruvate to phosphoserine and of 3-hydroxy-2-oxo-4-phosphonooxybutanoate to phosphohydroxythreonine. In Mycobacterium sp. (strain JLS), this protein is Putative phosphoserine aminotransferase.